Reading from the N-terminus, the 268-residue chain is Tropinone reductase homolog At2g29370 (268 aa).

22–46 (LVTGGSKGLGKAVVEELAMLGARVH) contributes to the NADP(+) binding site. S155 contributes to the substrate binding site. Y168 (proton acceptor) is an active-site residue.

It belongs to the short-chain dehydrogenases/reductases (SDR) family. SDR65C subfamily.

The chain is Tropinone reductase homolog At2g29370 from Arabidopsis thaliana (Mouse-ear cress).